Reading from the N-terminus, the 206-residue chain is MRVPAAVTGGCGCGVDGGGGCCRGGGKLADWEEGKDDEMKSVVVKGWTRMAQVVPLHDNASAEDDDDDEEDDDEDDDDDDDEDDEEEAAPPYVMAVDDSSVDRAVITALLRRSKYRDSGKRALEILGSEPNVSMIITDYWMPEMTGYDLLKKIKESSELKQIPVVIMSSENVPTRISRCLEEGAEDFLLKPVRPADISRITSRMLQ.

A disordered region spans residues 53-92; it reads VVPLHDNASAEDDDDDEEDDDEDDDDDDDEDDEEEAAPPY. The segment covering 61–88 has biased composition (acidic residues); the sequence is SAEDDDDDEEDDDEDDDDDDDEDDEEEA. One can recognise a Response regulatory domain in the interval 92 to 205; the sequence is YVMAVDDSSV…DISRITSRML (114 aa). At Asp-138 the chain carries 4-aspartylphosphate.

This sequence belongs to the ARR family. Type-A subfamily. In terms of processing, two-component system major event consists of a His-to-Asp phosphorelay between a sensor histidine kinase (HK) and a response regulator (RR). In plants, the His-to-Asp phosphorelay involves an additional intermediate named Histidine-containing phosphotransfer protein (HPt). This multistep phosphorelay consists of a His-Asp-His-Asp sequential transfer of a phosphate group between first a His and an Asp of the HK protein, followed by the transfer to a conserved His of the HPt protein and finally the transfer to an Asp in the receiver domain of the RR protein. In terms of tissue distribution, expressed in flowers, and at low levels in roots, mature leaves and shoots.

Functionally, functions as a response regulator involved in His-to-Asp phosphorelay signal transduction system. Phosphorylation of the Asp residue in the receiver domain activates the ability of the protein to promote the transcription of target genes. Type-A response regulators seem to act as negative regulators of the cytokinin signaling. This is Two-component response regulator ORR7 from Oryza sativa subsp. indica (Rice).